We begin with the raw amino-acid sequence, 509 residues long: Butyrophilin-like protein 1 (509 aa).

The N-terminal stretch at 1 to 27 (MMKGSPSVPPAGCLLPLLLLLFTGVSG) is a signal peptide. 2 consecutive Ig-like V-type domains span residues 28–139 (EVSW…QEVS) and 151–237 (PLVH…KAIL). Topologically, residues 28 to 250 (EVSWFSVKGP…PFFPKTCPWK (223 aa)) are extracellular. Intrachain disulfides connect C53–C127 and C167–C221. The chain crosses the membrane as a helical span at residues 251–271 (VALVCSVLILLVLLGGISLGI). The Cytoplasmic segment spans residues 272–509 (WKEHQVKRRE…SMGLSATAQP (238 aa)). A B30.2/SPRY domain is found at 316-509 (RKALYKEDWK…SMGLSATAQP (194 aa)). The disordered stretch occupies residues 349-372 (MPDQDKTDSRTEENRGEETVSSSQ). The span at 351–366 (DQDKTDSRTEENRGEE) shows a compositional bias: basic and acidic residues.

This sequence belongs to the immunoglobulin superfamily. BTN/MOG family.

It localises to the membrane. The protein is Butyrophilin-like protein 1 (Btnl1) of Mus musculus (Mouse).